A 161-amino-acid polypeptide reads, in one-letter code: Cyclic pyranopterin monophosphate synthase (161 aa).

Substrate is bound by residues 75–77 and 113–114; these read LCH and ME. Aspartate 128 is an active-site residue.

Belongs to the MoaC family. In terms of assembly, homohexamer; trimer of dimers.

It carries out the reaction (8S)-3',8-cyclo-7,8-dihydroguanosine 5'-triphosphate = cyclic pyranopterin phosphate + diphosphate. The protein operates within cofactor biosynthesis; molybdopterin biosynthesis. Its function is as follows. Catalyzes the conversion of (8S)-3',8-cyclo-7,8-dihydroguanosine 5'-triphosphate to cyclic pyranopterin monophosphate (cPMP). This Salmonella typhi protein is Cyclic pyranopterin monophosphate synthase.